A 377-amino-acid chain; its full sequence is 26S proteasome non-ATPase regulatory subunit 4 (377 aa).

The 184-residue stretch at 5–188 (STMVCVDNSE…LADALISSPI (184 aa)) folds into the VWFA domain. K122 participates in a covalent cross-link: Glycyl lysine isopeptide (Lys-Gly) (interchain with G-Cter in SUMO2). The segment at 197–262 (LGLGASDFEF…TEDSDDALLK (66 aa)) is interaction with UBQLN1. The region spanning 211–230 (SADPELALALRVSMEEQRQR) is the UIM 1 domain. Residues 216 to 220 (LALAL) form an essential for ubiquitin-binding region. Residues 224 to 237 (MEEQRQRQEEEARR) are compositionally biased toward basic and acidic residues. The tract at residues 224-255 (MEEQRQRQEEEARRAAAASAAEAGIATTGTED) is disordered. 2 positions are modified to phosphothreonine: T250 and T253. Phosphoserine is present on residues S256 and S266. Residues 282-301 (TEEEQIAYAMQMSLQGAEFG) enclose the UIM 2 domain. The essential for ubiquitin-binding stretch occupies residues 287–291 (IAYAM). 2 disordered regions span residues 300-327 (FGQAESADIDASSAMDTSEPAKEEDDYD) and 341-377 (NLPGVDPNNEAIRNAMGSLASQATKDGKKDKKEEDKK). Phosphoserine occurs at positions 358 and 361. Residues 365 to 377 (KDGKKDKKEEDKK) are compositionally biased toward basic and acidic residues.

It belongs to the proteasome subunit S5A family. As to quaternary structure, component of the 19S proteasome regulatory particle complex. The 26S proteasome consists of a 20S core particle (CP) and two 19S regulatory subunits (RP). The regulatory particle is made of a lid composed of 9 subunits, a base containing 6 ATPases and few additional components including PSMD4. Interacts with NUB1. Interacts with SQSTM1. Interacts with UBQLN4. Interacts with UBE3A. Interacts with UBQLN1 (via ubiquitin-like domain). Interacts with DDI2.

Functionally, component of the 26S proteasome, a multiprotein complex involved in the ATP-dependent degradation of ubiquitinated proteins. This complex plays a key role in the maintenance of protein homeostasis by removing misfolded or damaged proteins, which could impair cellular functions, and by removing proteins whose functions are no longer required. Therefore, the proteasome participates in numerous cellular processes, including cell cycle progression, apoptosis, or DNA damage repair. PSMD4 acts as an ubiquitin receptor subunit through ubiquitin-interacting motifs and selects ubiquitin-conjugates for destruction. Displays a preferred selectivity for longer polyubiquitin chains. The protein is 26S proteasome non-ATPase regulatory subunit 4 (PSMD4) of Homo sapiens (Human).